Consider the following 674-residue polypeptide: Xaa-Pro aminopeptidase 2 (674 aa).

An N-terminal signal peptide occupies residues 1–21; it reads MARAHWGCCPWLVLLCACAWG. N-linked (GlcNAc...) asparagine glycans are attached at residues asparagine 35, asparagine 49, and asparagine 65. Arginine 116 contacts substrate. Residues asparagine 278 and asparagine 291 are each glycosylated (N-linked (GlcNAc...) asparagine). Histidine 430 is a substrate binding site. Zn(2+) contacts are provided by aspartate 450, aspartate 461, and histidine 524. Histidine 524, histidine 533, and glutamate 555 together coordinate substrate. The Zn(2+) site is built by glutamate 555 and glutamate 569. A lipid anchor (GPI-anchor amidated alanine) is attached at alanine 649. A propeptide spans 650 to 674 (removed in mature form); the sequence is ARAPDTASWASVLVVSTLAILGWSV.

It belongs to the peptidase M24B family. As to quaternary structure, homotrimer. The cofactor is Zn(2+). Post-translationally, N-glycosylated. Expressed in kidney, lung, heart, placenta, liver, small intestine and colon. No expression in brain, skeletal muscle, pancreas, spleen, thymus, prostate, testis and ovary.

The protein resides in the cell membrane. The enzyme catalyses Release of any N-terminal amino acid, including proline, that is linked to proline, even from a dipeptide or tripeptide.. With respect to regulation, inhibited by apstatin and the chelating agent 1,10-phenanthroline. Also inhibited by high concentrations of Zn(2+). Not significantly inhibited by bestatin or phosphoramidon. Its function is as follows. Membrane-bound metalloprotease which catalyzes the removal of a penultimate prolyl residue from the N-termini of peptides, such as Arg-Pro-Pro. May play a role in the metabolism of the vasodilator bradykinin. This chain is Xaa-Pro aminopeptidase 2 (XPNPEP2), found in Homo sapiens (Human).